The following is a 222-amino-acid chain: Cytidylate kinase (222 aa).

9–17 contributes to the ATP binding site; that stretch reads GPSGAGKST.

The protein belongs to the cytidylate kinase family. Type 1 subfamily.

The protein resides in the cytoplasm. It carries out the reaction CMP + ATP = CDP + ADP. The catalysed reaction is dCMP + ATP = dCDP + ADP. In Thermodesulfovibrio yellowstonii (strain ATCC 51303 / DSM 11347 / YP87), this protein is Cytidylate kinase.